A 387-amino-acid polypeptide reads, in one-letter code: 1-deoxy-D-xylulose 5-phosphate reductoisomerase (387 aa).

Threonine 10, glycine 11, isoleucine 13, asparagine 38, and asparagine 122 together coordinate NADPH. Lysine 123 provides a ligand contact to 1-deoxy-D-xylulose 5-phosphate. Glutamate 124 is a binding site for NADPH. Aspartate 148 contributes to the Mn(2+) binding site. The 1-deoxy-D-xylulose 5-phosphate site is built by serine 149, glutamate 150, serine 174, and histidine 197. Mn(2+) is bound at residue glutamate 150. Glycine 203 is a binding site for NADPH. The 1-deoxy-D-xylulose 5-phosphate site is built by serine 210, asparagine 215, lysine 216, and glutamate 219. Glutamate 219 lines the Mn(2+) pocket.

It belongs to the DXR family. It depends on Mg(2+) as a cofactor. Mn(2+) is required as a cofactor.

The catalysed reaction is 2-C-methyl-D-erythritol 4-phosphate + NADP(+) = 1-deoxy-D-xylulose 5-phosphate + NADPH + H(+). It functions in the pathway isoprenoid biosynthesis; isopentenyl diphosphate biosynthesis via DXP pathway; isopentenyl diphosphate from 1-deoxy-D-xylulose 5-phosphate: step 1/6. Functionally, catalyzes the NADPH-dependent rearrangement and reduction of 1-deoxy-D-xylulose-5-phosphate (DXP) to 2-C-methyl-D-erythritol 4-phosphate (MEP). The sequence is that of 1-deoxy-D-xylulose 5-phosphate reductoisomerase from Ehrlichia ruminantium (strain Gardel).